Reading from the N-terminus, the 610-residue chain is Alpha-fetoprotein (610 aa).

The signal sequence occupies residues 1–18 (MKWVVSFFLLFLLNFSDS). Albumin domains lie at 19 to 210 (RTMH…TSIT), 211 to 403 (KELR…EELE), and 404 to 602 (KYIQ…ALIS). Histidine 22 contacts Cu(2+). 8 disulfides stabilise this stretch: cysteine 99-cysteine 114, cysteine 113-cysteine 124, cysteine 148-cysteine 193, cysteine 192-cysteine 201, cysteine 224-cysteine 270, cysteine 269-cysteine 277, cysteine 289-cysteine 303, and cysteine 302-cysteine 314. A phosphoserine mark is found at serine 111 and serine 115. Residues asparagine 197 and asparagine 251 are each glycosylated (N-linked (GlcNAc...) asparagine). A Phosphoserine modification is found at serine 345. 7 disulfides stabilise this stretch: cysteine 385–cysteine 394, cysteine 417–cysteine 463, cysteine 462–cysteine 473, cysteine 486–cysteine 502, cysteine 501–cysteine 512, cysteine 539–cysteine 584, and cysteine 583–cysteine 592. Serine 445 is modified (phosphoserine).

It belongs to the ALB/AFP/VDB family. As to quaternary structure, dimeric and trimeric forms have been found in addition to the monomeric form. Sulfated. Plasma.

The protein resides in the secreted. In terms of biological role, binds copper, nickel, and fatty acids as well as, and bilirubin less well than, serum albumin. The chain is Alpha-fetoprotein (AFP) from Bos taurus (Bovine).